The chain runs to 317 residues: Transcriptional activator protein med (317 aa).

The signal sequence occupies residues 1 to 17; it reads MITRLVMIFSVLLLLSG. The N-palmitoyl cysteine moiety is linked to residue Cys18. Cys18 is lipidated: S-diacylglycerol cysteine.

Belongs to the BMP lipoprotein family.

It localises to the cell membrane. Its function is as follows. Positive activator of the comK gene. The sequence is that of Transcriptional activator protein med (med) from Bacillus subtilis (strain 168).